We begin with the raw amino-acid sequence, 297 residues long: Formylmethanofuran--tetrahydromethanopterin formyltransferase-like protein (297 aa).

It belongs to the FTR family.

In Methanothermobacter thermautotrophicus (strain ATCC 29096 / DSM 1053 / JCM 10044 / NBRC 100330 / Delta H) (Methanobacterium thermoautotrophicum), this protein is Formylmethanofuran--tetrahydromethanopterin formyltransferase-like protein (ehaS).